A 1066-amino-acid polypeptide reads, in one-letter code: Vinculin (1066 aa).

The segment at 1–835 is N-terminal globular head; that stretch reads MPVFHTRTIE…GAVAKVREAF (835 aa). Residue serine 97 is modified to Phosphoserine. The tract at residues 168–208 is talin-interaction; that stretch reads MTKMAKMIDERQQELTHQEHRVMLVNSMNTVKELLPVLISA. Lysine 173 is subject to N6-acetyllysine. Tandem repeats lie at residues 259-369, 370-479, and 480-589. The segment at 259–589 is 3 X 112 AA tandem repeats; that stretch reads ASKDTEAMKR…LKDLKAQMQE (331 aa). Residues serine 260, serine 272, serine 275, serine 290, serine 346, and serine 434 each carry the phosphoserine modification. At lysine 496 the chain carries N6-acetyllysine. Tyrosine 537 bears the Phosphotyrosine mark. Phosphoserine is present on residues serine 574, serine 579, and serine 600. Phosphothreonine is present on residues threonine 604 and threonine 672. Serine 721 is subject to Phosphoserine. The interaction with ACTN4 stretch occupies residues 741–764; the sequence is MANIQPQMLVAGATSIARRANRIL. A phosphoserine mark is found at serine 795 and serine 809. Position 822 is a phosphotyrosine (tyrosine 822). The interval 836–878 is linker (Pro-rich); that stretch reads QPQEPDFPPPPPDLEQLRLTDELAPPKPPLPEGEVPPPRPPPP. A disordered region spans residues 857 to 887; it reads ELAPPKPPLPEGEVPPPRPPPPEEKDEEFPE. Residues 860–876 show a composition bias toward pro residues; it reads PPKPPLPEGEVPPPRPP. Residues 879 to 1066 are C-terminal tail; that stretch reads EEKDEEFPEQ…RWVRKTPWYQ (188 aa). 2 facilitates phospholipid membrane insertion regions span residues 935–978 and 1052–1066; these read RLVR…KRIR and AGFTLRWVRKTPWYQ. Residue tyrosine 1065 is modified to Phosphotyrosine; by SRC-type Tyr-kinases.

Belongs to the vinculin/alpha-catenin family. In terms of assembly, exhibits self-association properties. Part of a complex composed of THSD1, PTK2/FAK1, TLN1 and VCL. Interacts with APBB1IP, NRAP and TLN1. Interacts with SYNM. Interacts with CTNNB1 and this interaction is necessary for its localization to the cell-cell junctions and for its function in regulating cell surface expression of E-cadherin. Interacts with SORBS1. Interacts with SYNM. Interacts with CTNNA1. Binds to ACTN4; this interaction triggers conformational changes. Interacts with FLII. Post-translationally, phosphorylated; on serines, threonines and tyrosines. Phosphorylation on Tyr-1065 in activated platelets affects head-tail interactions and cell spreading but has no effect on actin binding nor on localization to focal adhesion plaques. Acetylated; mainly by myristic acid but also by a small amount of palmitic acid.

Its subcellular location is the cell membrane. It is found in the cell junction. The protein resides in the adherens junction. The protein localises to the focal adhesion. It localises to the cytoplasm. Its subcellular location is the cytoskeleton. It is found in the sarcolemma. The protein resides in the cell projection. The protein localises to the podosome. Its function is as follows. Actin filament (F-actin)-binding protein involved in cell-matrix adhesion and cell-cell adhesion. Regulates cell-surface E-cadherin expression and potentiates mechanosensing by the E-cadherin complex. May also play important roles in cell morphology and locomotion. This chain is Vinculin (Vcl), found in Mus musculus (Mouse).